The sequence spans 68 residues: UPF0291 protein TTE2340 (68 aa).

This sequence belongs to the UPF0291 family.

The protein resides in the cytoplasm. The chain is UPF0291 protein TTE2340 from Caldanaerobacter subterraneus subsp. tengcongensis (strain DSM 15242 / JCM 11007 / NBRC 100824 / MB4) (Thermoanaerobacter tengcongensis).